Consider the following 89-residue polypeptide: Small ribosomal subunit protein uS15 (89 aa).

This sequence belongs to the universal ribosomal protein uS15 family. Part of the 30S ribosomal subunit. Forms a bridge to the 50S subunit in the 70S ribosome, contacting the 23S rRNA.

In terms of biological role, one of the primary rRNA binding proteins, it binds directly to 16S rRNA where it helps nucleate assembly of the platform of the 30S subunit by binding and bridging several RNA helices of the 16S rRNA. Its function is as follows. Forms an intersubunit bridge (bridge B4) with the 23S rRNA of the 50S subunit in the ribosome. The sequence is that of Small ribosomal subunit protein uS15 from Bifidobacterium animalis subsp. lactis (strain AD011).